The primary structure comprises 316 residues: Melanocyte-stimulating hormone receptor (316 aa).

Over Met1–Glu37 the chain is Extracellular. N-linked (GlcNAc...) asparagine glycosylation is present at Asn29. The helical transmembrane segment at Val38–Ile63 threads the bilayer. Over Ala64–Pro72 the chain is Cytoplasmic. A helical transmembrane segment spans residues Met73–Leu93. Over Glu94–Asn118 the chain is Extracellular. The helical transmembrane segment at Thr119 to Val140 threads the bilayer. Topologically, residues Asp141–Arg163 are cytoplasmic. A helical transmembrane segment spans residues Val164–Tyr183. Residues Glu184–Cys191 lie on the Extracellular side of the membrane. Residues Leu192 to Leu210 form a helical membrane-spanning segment. Residues Ala211–Ala239 are Cytoplasmic-facing. Residues Ala240–Phe265 form a helical membrane-spanning segment. At Cys266–Asn278 the chain is on the extracellular side. Residues Phe279–Phe299 traverse the membrane as a helical segment. Residues Arg300 to Trp316 lie on the Cytoplasmic side of the membrane. A lipid anchor (S-palmitoyl cysteine) is attached at Cys314.

The protein belongs to the G-protein coupled receptor 1 family. Interacts with MGRN1, but does not undergo MGRN1-mediated ubiquitination; this interaction competes with GNAS-binding and thus inhibits agonist-induced cAMP production. Interacts with OPN3; the interaction results in a decrease in MC1R-mediated cAMP signaling and ultimately a decrease in melanin production in melanocytes.

It localises to the cell membrane. Functionally, receptor for MSH (alpha, beta and gamma) and ACTH. The activity of this receptor is mediated by G proteins which activate adenylate cyclase. Mediates melanogenesis, the production of eumelanin (black/brown) and phaeomelanin (red/yellow), via regulation of cAMP signaling in melanocytes. The chain is Melanocyte-stimulating hormone receptor (MC1R) from Cebus albifrons (White-fronted capuchin).